The primary structure comprises 412 residues: Proteasome-activating nucleotidase (412 aa).

Positions 18–72 form a coiled coil; sequence YRYLVDRVAGMESQNQELKEQIRQLESDKRYIETQKIRYEREVRKLKSEIEHLKT. ATP is bound by residues 197-202 and H336; that span reads GTGKTL. Positions 410–412 are docks into pockets in the proteasome alpha-ring to cause gate opening; the sequence is MFA.

The protein belongs to the AAA ATPase family. Homohexamer. The hexameric complex has a two-ring architecture resembling a top hat that caps the 20S proteasome core at one or both ends. Upon ATP-binding, the C-terminus of PAN interacts with the alpha-rings of the proteasome core by binding to the intersubunit pockets.

The protein localises to the cytoplasm. In terms of biological role, ATPase which is responsible for recognizing, binding, unfolding and translocation of substrate proteins into the archaeal 20S proteasome core particle. Is essential for opening the gate of the 20S proteasome via an interaction with its C-terminus, thereby allowing substrate entry and access to the site of proteolysis. Thus, the C-termini of the proteasomal ATPase function like a 'key in a lock' to induce gate opening and therefore regulate proteolysis. Unfolding activity requires energy from ATP hydrolysis, whereas ATP binding alone promotes ATPase-20S proteasome association which triggers gate opening, and supports translocation of unfolded substrates. The chain is Proteasome-activating nucleotidase from Methanospirillum hungatei JF-1 (strain ATCC 27890 / DSM 864 / NBRC 100397 / JF-1).